The chain runs to 269 residues: Formamidopyrimidine-DNA glycosylase (269 aa).

The Schiff-base intermediate with DNA role is filled by Pro2. Glu3 (proton donor) is an active-site residue. Lys57 acts as the Proton donor; for beta-elimination activity in catalysis. DNA-binding residues include His90, Arg109, and Lys150. The FPG-type zinc finger occupies 235–269 (RVYGRNGEPCRTCGTPIETAKHGQRSTFFCRRCQV). Arg259 acts as the Proton donor; for delta-elimination activity in catalysis.

This sequence belongs to the FPG family. As to quaternary structure, monomer. It depends on Zn(2+) as a cofactor.

It catalyses the reaction Hydrolysis of DNA containing ring-opened 7-methylguanine residues, releasing 2,6-diamino-4-hydroxy-5-(N-methyl)formamidopyrimidine.. The enzyme catalyses 2'-deoxyribonucleotide-(2'-deoxyribose 5'-phosphate)-2'-deoxyribonucleotide-DNA = a 3'-end 2'-deoxyribonucleotide-(2,3-dehydro-2,3-deoxyribose 5'-phosphate)-DNA + a 5'-end 5'-phospho-2'-deoxyribonucleoside-DNA + H(+). In terms of biological role, involved in base excision repair of DNA damaged by oxidation or by mutagenic agents. Acts as a DNA glycosylase that recognizes and removes damaged bases. Has a preference for oxidized purines, such as 7,8-dihydro-8-oxoguanine (8-oxoG). Has AP (apurinic/apyrimidinic) lyase activity and introduces nicks in the DNA strand. Cleaves the DNA backbone by beta-delta elimination to generate a single-strand break at the site of the removed base with both 3'- and 5'-phosphates. This is Formamidopyrimidine-DNA glycosylase from Pectobacterium atrosepticum (strain SCRI 1043 / ATCC BAA-672) (Erwinia carotovora subsp. atroseptica).